We begin with the raw amino-acid sequence, 1083 residues long: MSWDDAIEGVDRDTPGGRMPRAWNVAARLRAANDDISHAHVADGVPTYAELHCLSDFSFLRGASSAEQLFARAQHCGYSALAITDECSLAGIVRGLEASRVTGVRLIVGSEFTLIDGTRFVLLVENAHGYPQVCGLVTTARRAASKGAYRLGRADVEAQFRDVAPGVFALWLPGVQPQAEQGAWLQQVFGERAFLAVELHREQDDGARLQVLQALAQQLGMTAVASGDVHMAQRRERIVQDTLTAIRHTLPLAECGAHLFRNGERHLRTRRALGNIYPDALLQAAVALAQRCTFDISKISYTYPRELVPEGHTPTSYLRQLTEAGIRKRWPGGITAKVREDIEKELALIALKKYEAFFLTVQDVVRFAREQNILCQGRGSSANSAVCYALGITAVNPDETRLLMARFLSEKRDEPPDIDVDFEHERREEVLQYVYRKYGRERAALAATVICYRGKSAVRDVAKAFGLPPDQIALLANCYGWGNGETPMEQRIEEAGFDLANPLINKILLVTEHLRDHPRHLSQHVGGFVISDEPLSLLVPVENAAMADRTIIQWDKDDLETMKLLKVDCLALGMLTCIRKTLDLVRGHRGRDYSIATLPGEDLPTYKMIQRADTVGVFQIESRAQMAMLPRLKPAEFYDLVIEVAIVRPGPIQGDMVHPYLRRRQGREDVSYPSPAVEDILKPTLGVPLFQEQVMELLMHAADYTESEADNLRRSMAAWRRGGDMEQHRMRVRERMQGKGYASTFIDQIFEQIKGFGSYGFPQSHAASFAKLVYASCWLKRHEPAAFACGLLNAQPMGFYSASQIVQDARRGSPERERVEVLPVDVVHSDWDNTLVGGRPWRSAADPGEQPAIRLGMRQVAGLSDVVAQRIVAARTQRAFADIGDLCLRAALDEKACLALAEAGALQGMVGNRNAARWAMAGVEARRPLLPGSPEERPVAFEAPHAGEEILADYRSVGLSLRQHPMALLRPQMRQRRILGLRDLQGRPHGSGVHVAGLVTQRQRPATAKGTIFVTLEDEHGMINVIVWSHLALRRRRALLESRLLAVRGRWERVDGVEHLIAGDLHDLSDLLGDMQLPSRDFH.

The protein belongs to the DNA polymerase type-C family. DnaE2 subfamily.

It localises to the cytoplasm. It carries out the reaction DNA(n) + a 2'-deoxyribonucleoside 5'-triphosphate = DNA(n+1) + diphosphate. In terms of biological role, DNA polymerase involved in damage-induced mutagenesis and translesion synthesis (TLS). It is not the major replicative DNA polymerase. This Xanthomonas oryzae pv. oryzae (strain KACC10331 / KXO85) protein is Error-prone DNA polymerase.